Reading from the N-terminus, the 328-residue chain is DNA-directed RNA polymerase subunit alpha (328 aa).

An alpha N-terminal domain (alpha-NTD) region spans residues 1–231 (MIYQMQMPER…EHVSLFANFS (231 aa)). An alpha C-terminal domain (alpha-CTD) region spans residues 252–328 (MRKLLQTRIE…MDITKYQMKS (77 aa)).

The protein belongs to the RNA polymerase alpha chain family. Homodimer. The RNAP catalytic core consists of 2 alpha, 1 beta, 1 beta' and 1 omega subunit. When a sigma factor is associated with the core the holoenzyme is formed, which can initiate transcription.

The enzyme catalyses RNA(n) + a ribonucleoside 5'-triphosphate = RNA(n+1) + diphosphate. Functionally, DNA-dependent RNA polymerase catalyzes the transcription of DNA into RNA using the four ribonucleoside triphosphates as substrates. The polypeptide is DNA-directed RNA polymerase subunit alpha (Prosthecochloris aestuarii (strain DSM 271 / SK 413)).